A 37-amino-acid chain; its full sequence is Cytochrome b6-f complex subunit 5 (37 aa).

Residues 5–25 form a helical membrane-spanning segment; sequence LLSGIVLGLIPITLFGLLVAA.

It belongs to the PetG family. The 4 large subunits of the cytochrome b6-f complex are cytochrome b6, subunit IV (17 kDa polypeptide, PetD), cytochrome f and the Rieske protein, while the 4 small subunits are PetG, PetL, PetM and PetN. The complex functions as a dimer.

The protein localises to the plastid. Its subcellular location is the chloroplast thylakoid membrane. Component of the cytochrome b6-f complex, which mediates electron transfer between photosystem II (PSII) and photosystem I (PSI), cyclic electron flow around PSI, and state transitions. PetG is required for either the stability or assembly of the cytochrome b6-f complex. The sequence is that of Cytochrome b6-f complex subunit 5 from Pyropia yezoensis (Susabi-nori).